The sequence spans 427 residues: Thyroid hormone receptor alpha-A (427 aa).

Positions 1–11 (MENTEQEHNLP) are enriched in basic and acidic residues. Residues 1 to 40 (MENTEQEHNLPEGDETQWPNGVKRKRKNSQCSMNSTSDKS) form a disordered region. The tract at residues 1-56 (MENTEQEHNLPEGDETQWPNGVKRKRKNSQCSMNSTSDKSISVPGYVPSYLEKDEP) is modulating. Residues 29 to 40 (SQCSMNSTSDKS) show a composition bias toward polar residues. NR C4-type zinc fingers lie at residues 57–77 (CVVC…CEGC) and 95–119 (CKYD…FRKC). The segment at residues 57 to 131 (CVVCGDKATG…VGMAMDLVLD (75 aa)) is a DNA-binding region (nuclear receptor). In terms of domain architecture, NR LBD spans 167 to 410 (SEWELIRMVT…PPLFLEVFED (244 aa)).

Belongs to the nuclear hormone receptor family. NR1 subfamily. As to quaternary structure, interacts with ncoa2. As to expression, after the mid-blastula transition (MBT), expressed throughout the deep cells, which give rise to the embryo proper. In adults, isoform 2 shows highest expression in the eye and liver. Expressed in adult gonads.

The protein resides in the nucleus. In terms of biological role, high affinity receptor for triiodothyronine. In the absence of thyroid hormone during late blastula stage development, acts as a transcriptional repressor. Whereas in the presence of thyroid hormone, can act as an activator of transcription. In addition, represses retinoic acid (RA)-signaling during blastula and gastrula stages of development. This is Thyroid hormone receptor alpha-A (thraa) from Danio rerio (Zebrafish).